Here is a 233-residue protein sequence, read N- to C-terminus: Large ribosomal subunit protein uL3 (233 aa).

Belongs to the universal ribosomal protein uL3 family. As to quaternary structure, part of the 50S ribosomal subunit. Forms a cluster with proteins L14 and L19.

One of the primary rRNA binding proteins, it binds directly near the 3'-end of the 23S rRNA, where it nucleates assembly of the 50S subunit. The chain is Large ribosomal subunit protein uL3 from Ureaplasma urealyticum serovar 10 (strain ATCC 33699 / Western).